A 327-amino-acid chain; its full sequence is tRNA uridine(34) hydroxylase (327 aa).

Residues 142–240 form the Rhodanese domain; the sequence is DDPDTLVIDT…YLEQVPEAES (99 aa). The active-site Cysteine persulfide intermediate is cysteine 200.

Belongs to the TrhO family.

The enzyme catalyses uridine(34) in tRNA + AH2 + O2 = 5-hydroxyuridine(34) in tRNA + A + H2O. Its function is as follows. Catalyzes oxygen-dependent 5-hydroxyuridine (ho5U) modification at position 34 in tRNAs. The sequence is that of tRNA uridine(34) hydroxylase from Synechococcus sp. (strain CC9605).